A 595-amino-acid chain; its full sequence is Aspartate--tRNA(Asp/Asn) ligase (595 aa).

Glu175 is an L-aspartate binding site. The tract at residues 199 to 202 (QQYK) is aspartate. The L-aspartate site is built by Arg221 and His454. 221–223 (RDE) is a binding site for ATP. An ATP-binding site is contributed by Glu488. Arg495 contacts L-aspartate. 540-543 (GIDR) is a binding site for ATP.

This sequence belongs to the class-II aminoacyl-tRNA synthetase family. Type 1 subfamily. As to quaternary structure, homodimer.

The protein localises to the cytoplasm. It catalyses the reaction tRNA(Asx) + L-aspartate + ATP = L-aspartyl-tRNA(Asx) + AMP + diphosphate. Aspartyl-tRNA synthetase with relaxed tRNA specificity since it is able to aspartylate not only its cognate tRNA(Asp) but also tRNA(Asn). Reaction proceeds in two steps: L-aspartate is first activated by ATP to form Asp-AMP and then transferred to the acceptor end of tRNA(Asp/Asn). This chain is Aspartate--tRNA(Asp/Asn) ligase, found in Sinorhizobium medicae (strain WSM419) (Ensifer medicae).